The chain runs to 466 residues: Cytochrome b561 and DOMON domain-containing protein At3g59070 (466 aa).

Positions 1 to 25 (MSLSSRATLVVLCCLFMLIPSFTTA) are cleaved as a signal peptide. Positions 57–172 (LNSYLHFNYA…TVVNHLWQDG (116 aa)) constitute a DOMON domain. The region spanning 179–380 (RLGMHAMSGD…MEILQFKKRW (202 aa)) is the Cytochrome b561 domain. 3 helical membrane-spanning segments follow: residues 219 to 239 (IHAI…VMAA), 252 to 272 (WFYI…IGGL), and 287 to 307 (TLHT…ILSL). Heme b contacts are provided by histidine 220, histidine 256, histidine 289, and histidine 325. 2 helical membrane passes run 327 to 347 (TMGY…LSIL) and 355 to 375 (IAYT…EILQ).

It depends on heme b as a cofactor.

It is found in the membrane. In terms of biological role, may act as a catecholamine-responsive trans-membrane electron transporter. This is Cytochrome b561 and DOMON domain-containing protein At3g59070 from Arabidopsis thaliana (Mouse-ear cress).